The sequence spans 316 residues: DNA-directed RNA polymerase III subunit RPC6 (316 aa).

N-acetylalanine is present on Ala-2. Residues Lys-5 and Lys-7 each participate in a glycyl lysine isopeptide (Lys-Gly) (interchain with G-Cter in SUMO2) cross-link. The [4Fe-4S] cluster site is built by Cys-287, Cys-290, Cys-296, and Cys-307.

It belongs to the eukaryotic RPC34/RPC39 RNA polymerase subunit family. In terms of assembly, component of the RNA polymerase III complex consisting of 17 subunits: a ten-subunit horseshoe-shaped catalytic core composed of POLR3A/RPC1, POLR3B/RPC2, POLR1C/RPAC1, POLR1D/RPAC2, POLR3K/RPC10, POLR2E/RPABC1, POLR2F/RPABC2, POLR2H/RPABC3, POLR2K/RPABC4 and POLR2L/RPABC5; a mobile stalk composed of two subunits POLR3H/RPC8 and CRCP/RPC9, protruding from the core and functioning primarily in transcription initiation; and additional subunits homologous to general transcription factors of the RNA polymerase II machinery, POLR3C/RPC3-POLR3F/RPC6-POLR3G/RPC7 heterotrimer required for transcription initiation and POLR3D/RPC4-POLR3E/RPC5 heterodimer involved in both transcription initiation and termination. Directly interacts with POLR3C. Interacts with TBP and TFIIIB90 and GTF3C4. Interacts with MAF1. As part of the RNA polymerase III complex, interacts with PKP2.

It localises to the nucleus. DNA-dependent RNA polymerase catalyzes the transcription of DNA into RNA using the four ribonucleoside triphosphates as substrates. Specific peripheric component of RNA polymerase III (Pol III) which synthesizes small non-coding RNAs including 5S rRNA, snRNAs, tRNAs and miRNAs from at least 500 distinct genomic loci. Part of POLR3C/RPC3-POLR3F/RPC6-POLR3G/RPC7 heterotrimer that coordinates the dynamics of Pol III stalk and clamp modules during the transition from apo to elongation state. Pol III plays a key role in sensing and limiting infection by intracellular bacteria and DNA viruses, including varicella zoster virus. Acts as a nuclear and cytosolic DNA sensor detecting AT-rich DNA, involved in innate immune response. Can sense non-self dsDNA that serves as template for transcription into dsRNA. The non-self RNA polymerase III transcripts, such as Epstein-Barr virus-encoded RNAs (EBERs) induce type I interferon and NF-kappa-B through the RIG-I pathway. Preferentially binds double-stranded DNA (dsDNA). This is DNA-directed RNA polymerase III subunit RPC6 from Mus musculus (Mouse).